Reading from the N-terminus, the 39-residue chain is Potassium channel toxin alpha-KTx 31.1 (39 aa).

3 disulfides stabilise this stretch: C7–C30, C13–C35, and C17–C37.

It belongs to the short scorpion toxin superfamily. Potassium channel inhibitor family. Alpha-KTx 31 subfamily. As to expression, expressed by the venom gland.

It is found in the secreted. In terms of biological role, voltage-gated potassium channel inhibitor. 1 uM of the native toxin inhibits rat Kv1.2/KCNA2 (100% inhibition), and drosophila Shaker IR/Sh (100%), human Kv1.3/KCNA3 (83%), rat Kv1.1/KCNA1 (32%) and rat Kv1.6/KCNA6 (21%). In Buthus occitanus tunetanus (Common European scorpion), this protein is Potassium channel toxin alpha-KTx 31.1.